The primary structure comprises 417 residues: Serine hydroxymethyltransferase (417 aa).

(6S)-5,6,7,8-tetrahydrofolate-binding positions include Leu116 and 120–122 (GHL). Lys225 is modified (N6-(pyridoxal phosphate)lysine). 350–352 (SPF) is a (6S)-5,6,7,8-tetrahydrofolate binding site.

The protein belongs to the SHMT family. In terms of assembly, homodimer. It depends on pyridoxal 5'-phosphate as a cofactor.

The protein localises to the cytoplasm. It catalyses the reaction (6R)-5,10-methylene-5,6,7,8-tetrahydrofolate + glycine + H2O = (6S)-5,6,7,8-tetrahydrofolate + L-serine. It participates in one-carbon metabolism; tetrahydrofolate interconversion. The protein operates within amino-acid biosynthesis; glycine biosynthesis; glycine from L-serine: step 1/1. Catalyzes the reversible interconversion of serine and glycine with tetrahydrofolate (THF) serving as the one-carbon carrier. This reaction serves as the major source of one-carbon groups required for the biosynthesis of purines, thymidylate, methionine, and other important biomolecules. Also exhibits THF-independent aldolase activity toward beta-hydroxyamino acids, producing glycine and aldehydes, via a retro-aldol mechanism. The polypeptide is Serine hydroxymethyltransferase (Ligilactobacillus salivarius (strain UCC118) (Lactobacillus salivarius)).